The chain runs to 578 residues: Glutathione hydrolase 2 (578 aa).

Residues Met1–Ala26 form the signal peptide. Asn94 is a glycosylation site (N-linked (GlcNAc...) asparagine). Arg103 contacts L-glutamate. Residues Asn176 and Asn227 are each glycosylated (N-linked (GlcNAc...) asparagine). Residue Thr374 is the Nucleophile of the active site. L-glutamate is bound by residues Thr392, Asn394, Glu413, Asp416, Ser446–Ser447, and Gly467–Gly468. Asn511 carries an N-linked (GlcNAc...) asparagine glycan.

Belongs to the gamma-glutamyltransferase family. In terms of tissue distribution, expressed in roots, immature trichomes and pollen. In developing siliques, specifically expressed in the embryo, endosperm, outer integument and a small portion of the funiculus.

Its subcellular location is the secreted. It localises to the extracellular space. The protein resides in the apoplast. It catalyses the reaction an N-terminal (5-L-glutamyl)-[peptide] + an alpha-amino acid = 5-L-glutamyl amino acid + an N-terminal L-alpha-aminoacyl-[peptide]. The catalysed reaction is glutathione + H2O = L-cysteinylglycine + L-glutamate. The enzyme catalyses an S-substituted glutathione + H2O = an S-substituted L-cysteinylglycine + L-glutamate. It participates in sulfur metabolism; glutathione metabolism. May be required for glutathione transport into developing seeds. This Arabidopsis thaliana (Mouse-ear cress) protein is Glutathione hydrolase 2 (GGT2).